Here is a 194-residue protein sequence, read N- to C-terminus: Large ribosomal subunit protein bL9 (194 aa).

The disordered stretch occupies residues 169-194; it reads DDINDNARPENFFDPNAEFDGGEDNA.

The protein belongs to the bacterial ribosomal protein bL9 family.

Binds to the 23S rRNA. The chain is Large ribosomal subunit protein bL9 from Mesorhizobium japonicum (strain LMG 29417 / CECT 9101 / MAFF 303099) (Mesorhizobium loti (strain MAFF 303099)).